A 447-amino-acid chain; its full sequence is Putative FBD-associated F-box protein At1g61330 (447 aa).

The F-box domain maps to 10–57; the sequence is KLIKRLSDELVECILSFLPVQSTLQHRVLSKRYRDTWKLSRDLDFSGI. The region spanning 384–416 is the FBD domain; that stretch reads VKIIGYKGHWHELDIVEFFVKNAPSLKRLELQM.

The protein is Putative FBD-associated F-box protein At1g61330 of Arabidopsis thaliana (Mouse-ear cress).